Reading from the N-terminus, the 206-residue chain is Ras-related protein Ral-B (206 aa).

Position 21–29 (Gly-21–Ala-29) interacts with GTP. The Effector region signature appears at Tyr-43–Tyr-51. Residues Asp-68–Gln-72, Asn-128–Asp-131, and Ser-158–Lys-160 contribute to the GTP site. The segment covering Lys-180–Gly-189 has biased composition (basic and acidic residues). The tract at residues Lys-180 to Leu-206 is disordered. Position 203 is a cysteine methyl ester (Cys-203). Cys-203 carries the S-geranylgeranyl cysteine lipid modification. The propeptide at Cys-204–Leu-206 is removed in mature form.

Belongs to the small GTPase superfamily. Ras family. Interacts with EXOC2/Sec5 and EXOC8/Exo84. Interacts (via effector domain) with RALBP1. Post-translationally, prenylation is essential for membrane localization. In terms of processing, the farnesylated form confers resistance to the proapoptotic and anti-anchorage-dependent growth effects of some geranylgeranyltransferase I inhibitors.

It is found in the cell membrane. It localises to the midbody. The catalysed reaction is GTP + H2O = GDP + phosphate + H(+). With respect to regulation, alternates between an inactive form bound to GDP and an active form bound to GTP. Activated by a guanine nucleotide-exchange factor (GEF) and inactivated by a GTPase-activating protein (GAP). Its function is as follows. Multifunctional GTPase involved in a variety of cellular processes including gene expression, cell migration, cell proliferation, oncogenic transformation and membrane trafficking. Accomplishes its multiple functions by interacting with distinct downstream effectors. Acts as a GTP sensor for GTP-dependent exocytosis of dense core vesicles. Required both to stabilize the assembly of the exocyst complex and to localize functional exocyst complexes to the leading edge of migrating cells. Required for suppression of apoptosis. In late stages of cytokinesis, upon completion of the bridge formation between dividing cells, mediates exocyst recruitment to the midbody to drive abscission. Involved in ligand-dependent receptor mediated endocytosis of the EGF and insulin receptors. The sequence is that of Ras-related protein Ral-B (RALB) from Pongo abelii (Sumatran orangutan).